The chain runs to 442 residues: MLKHDTIAAIATPPGEGSIAVVRLSGPQAIVIADRIFSGSVASFASHTIHLGQVIFEETLIDQALLLLMRSPRSFTGEDVVEFQCHGGFFACSQILDALIALGARPALPGEFSQRAFLNGKIDLVQAEAIQNLIVAENIDAFRIAQTHFQGNFSKKIQEIHTLIIEALAFLEVLADFPEEEQPDLLVPQEKIQNALHIVEDFISSFDEGQRLAQGTSLILAGKPNVGKSSLLNALLQKNRAIVTHIPGTTRDILEEQWLLQGKRIRLLDTAGQRTTDNDIEKEGIERALSAMEEADGILWVIDATQPLEDLPKILFTKPSFLLWNKADLTPPPFLDTSLPQFAISAKTGEGLTQVKQALIQWMQKQEAGKTSKVFLVSSRHHMILQEVARCLKEAQQNLYLQPPEIIALELREALHSIGMLSGKEVTESILGEIFSKFCIGK.

Arg-23, Glu-82, and Lys-121 together coordinate (6S)-5-formyl-5,6,7,8-tetrahydrofolate. The TrmE-type G domain maps to 215-364; that stretch reads GTSLILAGKP…VKQALIQWMQ (150 aa). K(+) is bound at residue Asn-225. Residues 225-230, 244-250, 269-272, and 325-328 each bind GTP; these read NVGKSS, THIPGTT, DTAG, and NKAD. Ser-229 serves as a coordination point for Mg(2+). 3 residues coordinate K(+): Thr-244, Ile-246, and Thr-249. Position 250 (Thr-250) interacts with Mg(2+). Lys-442 contacts (6S)-5-formyl-5,6,7,8-tetrahydrofolate.

Belongs to the TRAFAC class TrmE-Era-EngA-EngB-Septin-like GTPase superfamily. TrmE GTPase family. Homodimer. Heterotetramer of two MnmE and two MnmG subunits. It depends on K(+) as a cofactor.

The protein resides in the cytoplasm. Exhibits a very high intrinsic GTPase hydrolysis rate. Involved in the addition of a carboxymethylaminomethyl (cmnm) group at the wobble position (U34) of certain tRNAs, forming tRNA-cmnm(5)s(2)U34. The sequence is that of tRNA modification GTPase MnmE from Chlamydia pneumoniae (Chlamydophila pneumoniae).